The following is a 174-amino-acid chain: Neuromedin-U (174 aa).

The signal sequence occupies residues 1–34 (MLRTESCRPRSPAGQVAAASPLLLLLLLLAWCAG). Positions 35–103 (ACRGAPILPQ…EQDEKDNTKR (69 aa)) are excised as a propeptide. Methionine 139 is modified (methionine sulfoxide; partial). Asparagine 166 is modified (asparagine amide). Positions 170–174 (SAGFI) are excised as a propeptide.

The protein belongs to the NmU family. In terms of tissue distribution, expressed throughout the enteric nervous system with highest levels being found in the jejunum.

It is found in the secreted. In terms of biological role, ligand for receptors NMUR1 and NMUR2. Stimulates muscle contractions of specific regions of the gastrointestinal tract. In humans, NmU stimulates contractions of the ileum and urinary bladder. Does not function as a ligand for either NMUR1 or NMUR2. Indirectly induces prolactin release although its potency is much lower than that of neuromedin precursor-related peptide 36. Functionally, does not function as a ligand for either NMUR1 or NMUR2. Indirectly induces prolactin release from lactotroph cells in the pituitary gland, probably via the hypothalamic dopaminergic system. The protein is Neuromedin-U (NMU) of Homo sapiens (Human).